The following is a 324-amino-acid chain: GTPase Era (324 aa).

In terms of domain architecture, Era-type G spans 31-199; that stretch reads KSGFIGIIGR…QELLVEHLEH (169 aa). The interval 39-46 is G1; it reads GRPNVGKS. 39–46 is a GTP binding site; the sequence is GRPNVGKS. The interval 65–69 is G2; the sequence is QTTRN. The segment at 86-89 is G3; the sequence is DTPG. GTP-binding positions include 86 to 90 and 148 to 151; these read DTPGI and NKVD. A G4 region spans residues 148–151; the sequence is NKVD. A G5 region spans residues 178-180; the sequence is FSA. The 77-residue stretch at 230-306 folds into the KH type-2 domain; it reads TREEVPHSVA…YLELFVKVQP (77 aa).

The protein belongs to the TRAFAC class TrmE-Era-EngA-EngB-Septin-like GTPase superfamily. Era GTPase family. As to quaternary structure, monomer.

It is found in the cytoplasm. Its subcellular location is the cell inner membrane. Functionally, an essential GTPase that binds both GDP and GTP, with rapid nucleotide exchange. Plays a role in 16S rRNA processing and 30S ribosomal subunit biogenesis and possibly also in cell cycle regulation and energy metabolism. The sequence is that of GTPase Era from Nostoc sp. (strain PCC 7120 / SAG 25.82 / UTEX 2576).